The chain runs to 213 residues: Small ribosomal subunit protein eS1 (213 aa).

The segment at 189–213 is disordered; the sequence is ARPEEVAAEEETAVDVDEEDVDVEA. Residues 194 to 213 are compositionally biased toward acidic residues; sequence VAAEEETAVDVDEEDVDVEA.

Belongs to the eukaryotic ribosomal protein eS1 family.

In Haloarcula marismortui (strain ATCC 43049 / DSM 3752 / JCM 8966 / VKM B-1809) (Halobacterium marismortui), this protein is Small ribosomal subunit protein eS1.